The following is a 625-amino-acid chain: Endoglucanase 13 (625 aa).

Positions 1-34 (MAATMNKTPATTFLLIPAAASLVLLLAAAASVEA) are cleaved as a signal peptide. Asp91 serves as the catalytic Nucleophile. His427 is a catalytic residue. A glycan (N-linked (GlcNAc...) asparagine) is linked at Asn440. Residues Asp479 and Glu488 contribute to the active site. The interval 509–530 (ADNTPEYTPAPNAPSPSNGGSP) is disordered.

The protein belongs to the glycosyl hydrolase 9 (cellulase E) family. In terms of tissue distribution, expressed in roots and flowers.

Its subcellular location is the secreted. It carries out the reaction Endohydrolysis of (1-&gt;4)-beta-D-glucosidic linkages in cellulose, lichenin and cereal beta-D-glucans.. The chain is Endoglucanase 13 (GLU6) from Oryza sativa subsp. japonica (Rice).